Consider the following 130-residue polypeptide: Small ribosomal subunit protein uS9 (130 aa).

It belongs to the universal ribosomal protein uS9 family.

In Bordetella parapertussis (strain 12822 / ATCC BAA-587 / NCTC 13253), this protein is Small ribosomal subunit protein uS9.